Consider the following 218-residue polypeptide: Small ribosomal subunit protein uS7 (218 aa).

This sequence belongs to the universal ribosomal protein uS7 family. Part of the 30S ribosomal subunit.

One of the primary rRNA binding proteins, it binds directly to 16S rRNA where it nucleates assembly of the head domain of the 30S subunit. Is located at the subunit interface close to the decoding center. This is Small ribosomal subunit protein uS7 (rps7) from Pyrococcus horikoshii (strain ATCC 700860 / DSM 12428 / JCM 9974 / NBRC 100139 / OT-3).